The chain runs to 381 residues: Cobalt-precorrin-5B C(1)-methyltransferase (381 aa).

Belongs to the CbiD family.

It catalyses the reaction Co-precorrin-5B + S-adenosyl-L-methionine = Co-precorrin-6A + S-adenosyl-L-homocysteine. Its pathway is cofactor biosynthesis; adenosylcobalamin biosynthesis; cob(II)yrinate a,c-diamide from sirohydrochlorin (anaerobic route): step 6/10. Functionally, catalyzes the methylation of C-1 in cobalt-precorrin-5B to form cobalt-precorrin-6A. In Prochlorococcus marinus (strain NATL2A), this protein is Cobalt-precorrin-5B C(1)-methyltransferase.